The sequence spans 515 residues: ATP synthase subunit alpha (515 aa).

ATP is bound at residue 171–178 (GDRQTGKT).

This sequence belongs to the ATPase alpha/beta chains family. In terms of assembly, F-type ATPases have 2 components, CF(1) - the catalytic core - and CF(0) - the membrane proton channel. CF(1) has five subunits: alpha(3), beta(3), gamma(1), delta(1), epsilon(1). CF(0) has three main subunits: a(1), b(2) and c(9-12). The alpha and beta chains form an alternating ring which encloses part of the gamma chain. CF(1) is attached to CF(0) by a central stalk formed by the gamma and epsilon chains, while a peripheral stalk is formed by the delta and b chains.

It localises to the cell inner membrane. It carries out the reaction ATP + H2O + 4 H(+)(in) = ADP + phosphate + 5 H(+)(out). Functionally, produces ATP from ADP in the presence of a proton gradient across the membrane. The alpha chain is a regulatory subunit. This Stenotrophomonas maltophilia (strain R551-3) protein is ATP synthase subunit alpha.